Here is a 74-residue protein sequence, read N- to C-terminus: ATP synthase subunit c (74 aa).

Helical transmembrane passes span 8–28 (FIGV…VSNI) and 52–72 (IGAG…MLLI).

It belongs to the ATPase C chain family. F-type ATPases have 2 components, F(1) - the catalytic core - and F(0) - the membrane proton channel. F(1) has five subunits: alpha(3), beta(3), gamma(1), delta(1), epsilon(1). F(0) has three main subunits: a(1), b(2) and c(10-14). The alpha and beta chains form an alternating ring which encloses part of the gamma chain. F(1) is attached to F(0) by a central stalk formed by the gamma and epsilon chains, while a peripheral stalk is formed by the delta and b chains.

Its subcellular location is the cell inner membrane. F(1)F(0) ATP synthase produces ATP from ADP in the presence of a proton or sodium gradient. F-type ATPases consist of two structural domains, F(1) containing the extramembraneous catalytic core and F(0) containing the membrane proton channel, linked together by a central stalk and a peripheral stalk. During catalysis, ATP synthesis in the catalytic domain of F(1) is coupled via a rotary mechanism of the central stalk subunits to proton translocation. In terms of biological role, key component of the F(0) channel; it plays a direct role in translocation across the membrane. A homomeric c-ring of between 10-14 subunits forms the central stalk rotor element with the F(1) delta and epsilon subunits. The sequence is that of ATP synthase subunit c from Rickettsia bellii (strain RML369-C).